We begin with the raw amino-acid sequence, 112 residues long: Putative pterin-4-alpha-carbinolamine dehydratase (112 aa).

The protein belongs to the pterin-4-alpha-carbinolamine dehydratase family.

The catalysed reaction is (4aS,6R)-4a-hydroxy-L-erythro-5,6,7,8-tetrahydrobiopterin = (6R)-L-erythro-6,7-dihydrobiopterin + H2O. The protein is Putative pterin-4-alpha-carbinolamine dehydratase of Shewanella frigidimarina (strain NCIMB 400).